The chain runs to 425 residues: Histone-binding protein RBBP4 (425 aa).

A2 carries the N-acetylalanine modification. 7 WD repeats span residues 32–125 (YDLV…NHEG), 126–175 (EVNR…RLRG), 176–223 (HQKE…KTIF), 225–270 (GHTA…HSVD), 271–314 (AHTA…HSFE), 315–371 (SHKD…FIHG), and 372–404 (GHTAKISDFSWNPNEPWVICSVSEDNIMQVWQM).

Belongs to the WD repeat RBAP46/RBAP48/MSI1 family. Binds directly to histone H4, probably via helix 1 of the histone fold, a region that is not accessible when histone H4 is in chromatin. Forms a large corepressor complex that contains ncor1, sin3a and possibly sin3b, histone deacetylases hdac2, hdac1, rbbp4 and possibly rbbp7.

The protein resides in the nucleus. The protein localises to the chromosome. Its subcellular location is the telomere. Its function is as follows. Core histone-binding subunit that may target chromatin assembly factors, chromatin remodeling factors and histone deacetylases to their histone substrates in a manner that is regulated by nucleosomal DNA. Component of several complexes which regulate chromatin metabolism. The protein is Histone-binding protein RBBP4 (rbbp4) of Xenopus tropicalis (Western clawed frog).